Consider the following 303-residue polypeptide: MIKQRTLKNTIRATGVGLHSGEKVYLTLKPAPVDTGIVFRRADLDPVVEIPARAANVGETTMSTTLVNGDVKVDTVEHLLSAMAGLGIDNAYVELSASEVPIMDGSAGPFVFLIQSAGLEEQDAAKKFIRILREVTVEEGDKRATFLPFEGFKVSFEIDFDHPVLRNRTQSASVDFSSTSFVKEVSRARTFGFMRDIEYLRKHNLALGGSVENAIVVDEDGVLNEDGLRYEDEFVKHKILDAIGDLYLLGNSLIGEFKGFKSGHALNNQLLRKLIAETDAWEVVTFEDASTAPISYMRPVAAV.

Residues histidine 78, histidine 237, and aspartate 241 each contribute to the Zn(2+) site. Histidine 264 serves as the catalytic Proton donor.

Belongs to the LpxC family. The cofactor is Zn(2+).

It catalyses the reaction a UDP-3-O-[(3R)-3-hydroxyacyl]-N-acetyl-alpha-D-glucosamine + H2O = a UDP-3-O-[(3R)-3-hydroxyacyl]-alpha-D-glucosamine + acetate. Its pathway is glycolipid biosynthesis; lipid IV(A) biosynthesis; lipid IV(A) from (3R)-3-hydroxytetradecanoyl-[acyl-carrier-protein] and UDP-N-acetyl-alpha-D-glucosamine: step 2/6. Its function is as follows. Catalyzes the hydrolysis of UDP-3-O-myristoyl-N-acetylglucosamine to form UDP-3-O-myristoylglucosamine and acetate, the committed step in lipid A biosynthesis. The chain is UDP-3-O-acyl-N-acetylglucosamine deacetylase from Pseudomonas putida (strain ATCC 700007 / DSM 6899 / JCM 31910 / BCRC 17059 / LMG 24140 / F1).